We begin with the raw amino-acid sequence, 124 residues long: Small ribosomal subunit protein bS6 (124 aa).

It belongs to the bacterial ribosomal protein bS6 family.

In terms of biological role, binds together with bS18 to 16S ribosomal RNA. This chain is Small ribosomal subunit protein bS6, found in Actinobacillus pleuropneumoniae serotype 7 (strain AP76).